A 165-amino-acid polypeptide reads, in one-letter code: NADH-quinone oxidoreductase subunit I (165 aa).

4Fe-4S ferredoxin-type domains follow at residues 57 to 86 (RRYE…IESD) and 96 to 125 (SRYD…ETHI). Cysteine 66, cysteine 69, cysteine 72, cysteine 76, cysteine 105, cysteine 108, cysteine 111, and cysteine 115 together coordinate [4Fe-4S] cluster.

Belongs to the complex I 23 kDa subunit family. NDH-1 is composed of 14 different subunits. Subunits NuoA, H, J, K, L, M, N constitute the membrane sector of the complex. The cofactor is [4Fe-4S] cluster.

It is found in the cell inner membrane. It catalyses the reaction a quinone + NADH + 5 H(+)(in) = a quinol + NAD(+) + 4 H(+)(out). NDH-1 shuttles electrons from NADH, via FMN and iron-sulfur (Fe-S) centers, to quinones in the respiratory chain. The immediate electron acceptor for the enzyme in this species is believed to be ubiquinone. Couples the redox reaction to proton translocation (for every two electrons transferred, four hydrogen ions are translocated across the cytoplasmic membrane), and thus conserves the redox energy in a proton gradient. The protein is NADH-quinone oxidoreductase subunit I of Polaromonas naphthalenivorans (strain CJ2).